A 448-amino-acid polypeptide reads, in one-letter code: uncharacterized protein (448 aa).

Residue Lys297 is modified to N6-(pyridoxal phosphate)lysine.

Belongs to the class-III pyridoxal-phosphate-dependent aminotransferase family. Requires pyridoxal 5'-phosphate as cofactor.

This is an uncharacterized protein from Sinorhizobium fredii (strain NBRC 101917 / NGR234).